The sequence spans 347 residues: Phenylalanine--tRNA ligase alpha subunit (347 aa).

Glu268 lines the Mg(2+) pocket.

It belongs to the class-II aminoacyl-tRNA synthetase family. Phe-tRNA synthetase alpha subunit type 1 subfamily. As to quaternary structure, tetramer of two alpha and two beta subunits. Mg(2+) is required as a cofactor.

It localises to the cytoplasm. The catalysed reaction is tRNA(Phe) + L-phenylalanine + ATP = L-phenylalanyl-tRNA(Phe) + AMP + diphosphate + H(+). The protein is Phenylalanine--tRNA ligase alpha subunit of Leptothrix cholodnii (strain ATCC 51168 / LMG 8142 / SP-6) (Leptothrix discophora (strain SP-6)).